Here is a 94-residue protein sequence, read N- to C-terminus: Defensin alpha 5 (94 aa).

Residues 1–19 (MRTIAILAAILLVALQAQA) form the signal peptide. Disulfide bonds link C65-C93, C67-C82, and C72-C92.

This sequence belongs to the alpha-defensin family. In terms of assembly, homodimer. Homotetramer. Interacts with B.antracis lef/lethal factor. Glycosylated. In terms of processing, proteolytically cleaved at Arg-62 by trypsin. Both the propeptide form proHD5/HD5(20-94) and HD5(56-94) are cleaved into the lumenal peptide form HD5(63-94) by trypsin. Unprocessed proHD5 exerts antimicrobial activities, but peptide potency is enhanced by peptide processing. Proteolytically cleaved in duodenal fluid; derived fragments are antimicrobially active against commensal bacteria (in vitro).

The protein resides in the secreted. It localises to the cytoplasmic vesicle. The protein localises to the secretory vesicle. Its function is as follows. Host-defense peptide that maintains sterility in the urogenital system. Has antimicrobial activity against a wide range of bacteria, including Gram-negative E.coli, P.aeruginosa and S.typhimurium, and Gram-positive E.aerogenes, S.aureus, B.cereus, E.faecium and L.monocytogenes. Confers resistance to intestinal infection by S.typhimurium. Exhibits antimicrobial activity against enteric commensal bacteria such as B.adolescentis, L.acidophilus, B.breve, L.fermentum, B.longum and S.thermophilus. Binds to bacterial membranes and causes membrane disintegration. Induces the secretion of the chemokine IL-8 by intestinal epithelial cells. Binds to B.antracis lef/lethal factor, a major virulence factor from B.anthracis, and neutralizes its enzymatic activity. In Pan troglodytes (Chimpanzee), this protein is Defensin alpha 5 (DEFA5).